Here is a 333-residue protein sequence, read N- to C-terminus: Polygalacturonase inhibitor (333 aa).

Residues 1–27 form the signal peptide; the sequence is METSKLFLLSSSLLLVLLATRPCPSLS. Cystine bridges form between C30–C60 and C61–C68. LRR repeat units lie at residues 72–96, 97–120, 121–144, 145–169, 170–192, 194–220, 221–240, 241–263, 264–288, and 290–312; these read THRI…VGDL, PFLE…AIAK, LKHL…FFSE, LKNL…LSLL, PNLG…SFGK, AGST…GFDP, NVMD…FFNA, NKST…RVEF, PKSL…MTSL, and LQFL…KLQS. Residues N109, N133, N147, and N157 are each glycosylated (N-linked (GlcNAc...) asparagine). A glycan (N-linked (GlcNAc...) asparagine) is linked at N241. N294 carries N-linked (GlcNAc...) asparagine glycosylation. Disulfide bonds link C301–C323 and C325–C332.

Belongs to the polygalacturonase-inhibiting protein family.

It is found in the secreted. The protein localises to the cell wall. The protein resides in the membrane. In terms of biological role, inhibitor of fungal polygalacturonase. It is an important factor for plant resistance to phytopathogenic fungi. This Vitis vinifera (Grape) protein is Polygalacturonase inhibitor (pgip).